Consider the following 237-residue polypeptide: Maternal B9.10 protein (237 aa).

This sequence belongs to the BTG family.

The protein is Maternal B9.10 protein of Xenopus laevis (African clawed frog).